A 281-amino-acid polypeptide reads, in one-letter code: ATP synthase gamma chain (281 aa).

Belongs to the ATPase gamma chain family. As to quaternary structure, F-type ATPases have 2 components, CF(1) - the catalytic core - and CF(0) - the membrane proton channel. CF(1) has five subunits: alpha(3), beta(3), gamma(1), delta(1), epsilon(1). CF(0) has three main subunits: a, b and c.

The protein localises to the cell membrane. Produces ATP from ADP in the presence of a proton gradient across the membrane. The gamma chain is believed to be important in regulating ATPase activity and the flow of protons through the CF(0) complex. The chain is ATP synthase gamma chain from Clostridium pasteurianum.